The primary structure comprises 802 residues: Fibroblast growth factor receptor 4 (802 aa).

The N-terminal stretch at 1 to 21 (MRLLLALLGVLLSVPGPPVLS) is a signal peptide. Residues 22 to 118 (LEASEEVELE…VLQNLTLITG (97 aa)) enclose the Ig-like C2-type 1 domain. The Extracellular portion of the chain corresponds to 22-369 (LEASEEVELE…AAAPEARYTD (348 aa)). A disulfide bond links C57 and C101. N112 carries an N-linked (GlcNAc...) asparagine glycan. The segment at 119–148 (DSLTSSNDDEDPKSHRDPSNRHSYPQQAPY) is disordered. 2 consecutive Ig-like C2-type domains span residues 152–240 (PQRM…YLLD) and 249–349 (PILQ…AWLT). The cysteines at positions 172 and 224 are disulfide-linked. N-linked (GlcNAc...) asparagine glycosylation is found at N258, N290, N311, and N322. C271 and C333 are oxidised to a cystine. A helical membrane pass occupies residues 370-390 (IILYASGSLALAVLLLLAGLY). Y390 is subject to Phosphotyrosine; in variant R-388. At 391-802 (RGQALHGRHP…SFPFGSGVQT (412 aa)) the chain is on the cytoplasmic side. The Protein kinase domain maps to 467–755 (LVLGKPLGEG…VLLAVSEEYL (289 aa)). ATP is bound by residues 473-481 (LGEGCFGQV) and K503. Residue S573 is modified to Phosphoserine. Residue D612 is the Proton acceptor of the active site. A phosphotyrosine; by autocatalysis mark is found at Y642, Y643, and Y754.

Belongs to the protein kinase superfamily. Tyr protein kinase family. Fibroblast growth factor receptor subfamily. As to quaternary structure, monomer. Homodimer after ligand binding. Interacts with FGF1, FGF2, FGF4, FGF6, FGF8, FGF9, FGF16, FGF17, FGF18, FGF19, FGF21 and FGF23 (in vitro). Binding affinity for FGF family members is enhanced by interactions between FGFs and heparan sulfate proteoglycans. Interacts with KLB; this strongly increases the affinity for FGF19 and FGF23. Affinity for FGF19 is strongly increased by KLB and sulfated glycosaminoglycans. KLB and KL both interact with the core-glycosylated FGFR4 in the endoplasmic reticulum and promote its degradation, so that only FGFR4 with fully mature N-glycans is expressed at the cell surface. Identified in a complex with NCAM1, CDH2, PLCG1, FRS2, SRC, SHC1, GAP43 and CTTN. Interacts with MMP14 and HIP1. Interacts with STAT3. In terms of processing, N-glycosylated. Full maturation of the glycan chains in the Golgi is essential for high affinity interaction with FGF19. Post-translationally, ubiquitinated. Subject to proteasomal degradation when not fully glycosylated. Autophosphorylated. Binding of FGF family members together with heparan sulfate proteoglycan or heparin promotes receptor dimerization and autophosphorylation on tyrosine residues. Autophosphorylation occurs in trans between the two FGFR molecules present in the dimer. As to expression, expressed in gastrointestinal epithelial cells, pancreas, and gastric and pancreatic cancer cell lines.

The protein localises to the cell membrane. It localises to the endosome. The protein resides in the endoplasmic reticulum. It is found in the secreted. It carries out the reaction L-tyrosyl-[protein] + ATP = O-phospho-L-tyrosyl-[protein] + ADP + H(+). With respect to regulation, present in an inactive conformation in the absence of bound ligand. Ligand binding leads to dimerization and activation by autophosphorylation on tyrosine residues. Its function is as follows. Tyrosine-protein kinase that acts as a cell-surface receptor for fibroblast growth factors and plays a role in the regulation of cell proliferation, differentiation and migration, and in regulation of lipid metabolism, bile acid biosynthesis, glucose uptake, vitamin D metabolism and phosphate homeostasis. Required for normal down-regulation of the expression of CYP7A1, the rate-limiting enzyme in bile acid synthesis, in response to FGF19. Phosphorylates PLCG1 and FRS2. Ligand binding leads to the activation of several signaling cascades. Activation of PLCG1 leads to the production of the cellular signaling molecules diacylglycerol and inositol 1,4,5-trisphosphate. Phosphorylation of FRS2 triggers recruitment of GRB2, GAB1, PIK3R1 and SOS1, and mediates activation of RAS, MAPK1/ERK2, MAPK3/ERK1 and the MAP kinase signaling pathway, as well as of the AKT1 signaling pathway. Promotes SRC-dependent phosphorylation of the matrix protease MMP14 and its lysosomal degradation. FGFR4 signaling is down-regulated by receptor internalization and degradation; MMP14 promotes internalization and degradation of FGFR4. Mutations that lead to constitutive kinase activation or impair normal FGFR4 inactivation lead to aberrant signaling. The polypeptide is Fibroblast growth factor receptor 4 (FGFR4) (Homo sapiens (Human)).